We begin with the raw amino-acid sequence, 142 residues long: Large ribosomal subunit protein uL23 (142 aa).

Belongs to the universal ribosomal protein uL23 family.

Its function is as follows. This protein binds to a specific region on the 26S rRNA. In Cyberlindnera jadinii (Torula yeast), this protein is Large ribosomal subunit protein uL23 (RPL25).